A 205-amino-acid chain; its full sequence is Putative 3-methyladenine DNA glycosylase (205 aa).

Belongs to the DNA glycosylase MPG family.

This is Putative 3-methyladenine DNA glycosylase from Bacillus cereus (strain B4264).